The chain runs to 148 residues: Arginine repressor (148 aa).

This sequence belongs to the ArgR family.

It is found in the cytoplasm. It participates in amino-acid biosynthesis; L-arginine biosynthesis [regulation]. Functionally, regulates arginine biosynthesis genes. The protein is Arginine repressor (argR) of Streptococcus pneumoniae serotype 4 (strain ATCC BAA-334 / TIGR4).